We begin with the raw amino-acid sequence, 399 residues long: Formate-dependent phosphoribosylglycinamide formyltransferase (399 aa).

Residues 21-22 and Glu-81 each bind N(1)-(5-phospho-beta-D-ribosyl)glycinamide; that span reads EL. ATP is bound by residues Arg-114, Lys-156, 161-166, 196-199, and Glu-204; these read SSGKGQ and EGFI. The ATP-grasp domain occupies 119 to 314; that stretch reads RLAAEELGLP…EFELHARAIL (196 aa). Mg(2+)-binding residues include Glu-273 and Glu-285. Residues Asp-292, Lys-361, and 368–369 each bind N(1)-(5-phospho-beta-D-ribosyl)glycinamide; that span reads RR. The tract at residues 370-399 is disordered; sequence MGVAVANGESTDQARERAKLAASKVRPTRT.

It belongs to the PurK/PurT family. Homodimer.

The enzyme catalyses N(1)-(5-phospho-beta-D-ribosyl)glycinamide + formate + ATP = N(2)-formyl-N(1)-(5-phospho-beta-D-ribosyl)glycinamide + ADP + phosphate + H(+). The protein operates within purine metabolism; IMP biosynthesis via de novo pathway; N(2)-formyl-N(1)-(5-phospho-D-ribosyl)glycinamide from N(1)-(5-phospho-D-ribosyl)glycinamide (formate route): step 1/1. Involved in the de novo purine biosynthesis. Catalyzes the transfer of formate to 5-phospho-ribosyl-glycinamide (GAR), producing 5-phospho-ribosyl-N-formylglycinamide (FGAR). Formate is provided by PurU via hydrolysis of 10-formyl-tetrahydrofolate. The protein is Formate-dependent phosphoribosylglycinamide formyltransferase of Dechloromonas aromatica (strain RCB).